A 381-amino-acid polypeptide reads, in one-letter code: tRNA-specific 2-thiouridylase MnmA (381 aa).

ATP contacts are provided by residues 9 to 16 (GMSGGVDS) and Met35. An interaction with target base in tRNA region spans residues 95 to 97 (NPD). Catalysis depends on Cys100, which acts as the Nucleophile. An intrachain disulfide couples Cys100 to Cys196. ATP is bound at residue Gly124. The interval 146 to 148 (KDQ) is interaction with tRNA. The active-site Cysteine persulfide intermediate is the Cys196. The interval 308–309 (RY) is interaction with tRNA.

This sequence belongs to the MnmA/TRMU family.

Its subcellular location is the cytoplasm. It carries out the reaction S-sulfanyl-L-cysteinyl-[protein] + uridine(34) in tRNA + AH2 + ATP = 2-thiouridine(34) in tRNA + L-cysteinyl-[protein] + A + AMP + diphosphate + H(+). In terms of biological role, catalyzes the 2-thiolation of uridine at the wobble position (U34) of tRNA, leading to the formation of s(2)U34. This is tRNA-specific 2-thiouridylase MnmA from Paraburkholderia xenovorans (strain LB400).